A 678-amino-acid polypeptide reads, in one-letter code: MKIPEDIKKRIEKLREEIEYHNYRYYVLADPIISDEEYDRLMQELIELEKKYPELVTPDSPSQRVGEKVLDEFRSVEHSEPMLSLDNTYDEAQIREFDKRVRKLLEKDTIEYVTELKIDGVSVALRYENGRFVLGLSRGDGTRGDDITENLKKVRSIPLILREPVTVEVRGEIYMPTEEFERLNEERKKVDGPLFANPRNATAGTLRQLDTSVIRNRRLDSFIYYVLSPERYGLQTQWDALKWLKKIGFKVNPYSQLCQNIDQVIDYWKQWIEKKSELSYWVDGVVVKVNHFNFQSILGSTSRSPRWAIAFKFPAQRAKTRVLNIIVQVGRTGILTPVAELEPIQLAGTVVKRVSLHNFDYIEEKDIRIGDQVYVEKSGGIIPQVVSVIADERNGSEKKIEIPSKCPVCSGKVGKIDSEDVALRCLNPHCPAKLKRALETFVSRGALNIKGLGEKLIDRLVDSGLVKDIADIFYLTPFELSQLGSGIGQKMIANLLAQIEQAKKTPLHKILTGLGIPLVGEKTARILTQKFRSIKRLLSSSVDELTQIEGIGIEIAKNIREYFDNEKTRQIIGKLEKAGLNLEEKEAVVQSKILSNLTFAVTGTLKNFTRDQIKQLVQSLGGQVTDSVSKSTDYVIVGDNPGSKLTKARNLGVKLLTEDEFLQFVKIDIKNLRQQKLF.

NAD(+)-binding positions include 35–39, 84–85, and Glu-115; these read DEEYD and SL. The active-site N6-AMP-lysine intermediate is Lys-117. Residues Arg-138, Glu-172, Lys-288, and Lys-312 each contribute to the NAD(+) site. Zn(2+) contacts are provided by Cys-406, Cys-409, Cys-425, and Cys-430. The region spanning 589 to 678 is the BRCT domain; it reads VQSKILSNLT…IKNLRQQKLF (90 aa).

This sequence belongs to the NAD-dependent DNA ligase family. LigA subfamily. The cofactor is Mg(2+). Requires Mn(2+) as cofactor.

It catalyses the reaction NAD(+) + (deoxyribonucleotide)n-3'-hydroxyl + 5'-phospho-(deoxyribonucleotide)m = (deoxyribonucleotide)n+m + AMP + beta-nicotinamide D-nucleotide.. In terms of biological role, DNA ligase that catalyzes the formation of phosphodiester linkages between 5'-phosphoryl and 3'-hydroxyl groups in double-stranded DNA using NAD as a coenzyme and as the energy source for the reaction. It is essential for DNA replication and repair of damaged DNA. This chain is DNA ligase, found in Pseudothermotoga lettingae (strain ATCC BAA-301 / DSM 14385 / NBRC 107922 / TMO) (Thermotoga lettingae).